The primary structure comprises 367 residues: tRNA/tmRNA (uracil-C(5))-methyltransferase (367 aa).

Residues Q190, Y218, N223, E239, and D299 each contribute to the S-adenosyl-L-methionine site. The Nucleophile role is filled by C324. Catalysis depends on E358, which acts as the Proton acceptor.

It belongs to the class I-like SAM-binding methyltransferase superfamily. RNA M5U methyltransferase family. TrmA subfamily.

The catalysed reaction is uridine(54) in tRNA + S-adenosyl-L-methionine = 5-methyluridine(54) in tRNA + S-adenosyl-L-homocysteine + H(+). It carries out the reaction uridine(341) in tmRNA + S-adenosyl-L-methionine = 5-methyluridine(341) in tmRNA + S-adenosyl-L-homocysteine + H(+). In terms of biological role, dual-specificity methyltransferase that catalyzes the formation of 5-methyluridine at position 54 (m5U54) in all tRNAs, and that of position 341 (m5U341) in tmRNA (transfer-mRNA). In Pectobacterium atrosepticum (strain SCRI 1043 / ATCC BAA-672) (Erwinia carotovora subsp. atroseptica), this protein is tRNA/tmRNA (uracil-C(5))-methyltransferase.